A 523-amino-acid polypeptide reads, in one-letter code: Putative F-box protein At1g30925 (523 aa).

An F-box domain is found at 4–44; that stretch reads FPNDDLVYEILLRLPAKSVARCSCVSKLRRSILSRQDFTEL.

The polypeptide is Putative F-box protein At1g30925 (Arabidopsis thaliana (Mouse-ear cress)).